Reading from the N-terminus, the 421-residue chain is Isocitrate dehydrogenase [NADP], mitochondrial (421 aa).

The N-terminal 8 residues, 1 to 8 (ARAAARHY), are a transit peptide targeting the mitochondrion. N6-acetyllysine is present on residues lysine 14, lysine 17, lysine 36, and lysine 38. An N6-acetyllysine; alternate mark is found at lysine 49 and lysine 75. 2 positions are modified to N6-succinyllysine; alternate: lysine 49 and lysine 75. NADP(+) contacts are provided by residues 84–86 (TIT) and arginine 91. D-threo-isocitrate is bound at residue threonine 86. D-threo-isocitrate is bound by residues 103 to 109 (SPNGTIR) and arginine 118. At lysine 124 the chain carries N6-acetyllysine. Lysine 135 is modified (N6-acetyllysine; alternate). Lysine 135 bears the N6-succinyllysine; alternate mark. Position 141 (arginine 141) interacts with D-threo-isocitrate. Lysine 149 and lysine 162 each carry N6-acetyllysine; alternate. 2 positions are modified to N6-succinyllysine; alternate: lysine 149 and lysine 162. Position 168 is an N6-acetyllysine (lysine 168). Lysine 225 carries the N6-acetyllysine; alternate modification. Lysine 225 carries the N6-succinyllysine; alternate modification. Residues lysine 232, lysine 241, lysine 244, and lysine 249 each carry the N6-acetyllysine modification. Residue lysine 251 is modified to N6-acetyllysine; alternate. An N6-succinyllysine; alternate modification is found at lysine 251. A Mn(2+)-binding site is contributed by aspartate 260. Lysine 268 provides a ligand contact to NADP(+). Position 283 (aspartate 283) interacts with Mn(2+). Residues 318–323 (GTVTRH) and asparagine 336 contribute to the NADP(+) site. N6-acetyllysine; alternate is present on lysine 353. Residue lysine 353 is modified to N6-succinyllysine; alternate. An N6-acetyllysine mark is found at lysine 369, lysine 382, and lysine 411.

It belongs to the isocitrate and isopropylmalate dehydrogenases family. Homodimer. The cofactor is Mg(2+). Mn(2+) is required as a cofactor. In terms of processing, acetylation at Lys-382 dramatically reduces catalytic activity. Deacetylated by SIRT3.

The protein resides in the mitochondrion. It carries out the reaction D-threo-isocitrate + NADP(+) = 2-oxoglutarate + CO2 + NADPH. Its function is as follows. Plays a role in intermediary metabolism and energy production. It may tightly associate or interact with the pyruvate dehydrogenase complex. The polypeptide is Isocitrate dehydrogenase [NADP], mitochondrial (IDH2) (Sus scrofa (Pig)).